We begin with the raw amino-acid sequence, 365 residues long: 3-galactosyl-N-acetylglucosaminide 4-alpha-L-fucosyltransferase FUT3 (365 aa).

Residues 1–15 (MYPPGCAKVKCSWHH) lie on the Cytoplasmic side of the membrane. Residues 16–34 (CLPGLLLQLLLALCFFSYL) form a helical; Signal-anchor for type II membrane protein membrane-spanning segment. Residues 35 to 365 (RMSQEKPKPK…TVPSIASWFQ (331 aa)) lie on the Lumenal side of the membrane. N100, N158, and N189 each carry an N-linked (GlcNAc...) asparagine glycan.

Belongs to the glycosyltransferase 10 family. Glycosylated. In terms of tissue distribution, liver, kidney, lung and brain.

The protein resides in the golgi apparatus. It is found in the golgi stack membrane. It catalyses the reaction a beta-D-galactosyl-(1-&gt;3)-N-acetyl-beta-D-glucosaminyl derivative + GDP-beta-L-fucose = a beta-D-galactosyl-(1-&gt;3)-[alpha-L-fucosyl-(1-&gt;4)]-N-acetyl-beta-D-glucosaminyl derivative + GDP + H(+). The catalysed reaction is an N-acetyl-alpha-neuraminyl-(2-&gt;3)-beta-D-galactosyl-(1-&gt;4)-N-acetyl-beta-D-glucosaminyl derivative + GDP-beta-L-fucose = an alpha-Neu5Ac-(2-&gt;3)-beta-D-Gal-(1-&gt;4)-[alpha-L-Fuc-(1-&gt;3)]-beta-D-GlcNAc derivative + GDP + H(+). It carries out the reaction a beta-D-galactosyl-(1-&gt;4)-N-acetyl-beta-D-glucosaminyl derivative + GDP-beta-L-fucose = a beta-D-galactosyl-(1-&gt;4)-[alpha-L-fucosyl-(1-&gt;3)]-N-acetyl-beta-D-glucosaminyl derivative + GDP + H(+). The enzyme catalyses an alpha-Neu5Ac-(2-&gt;3)-beta-D-Gal-(1-&gt;4)-beta-D-GlcNAc-(1-&gt;3)-beta-D-Gal-(1-&gt;4)-[alpha-L-Fuc-(1-&gt;3)]-beta-D-GlcNAc derivative + GDP-beta-L-fucose = an alpha-Neu5Ac-(2-&gt;3)-beta-D-Gal-(1-&gt;4)-[alpha-L-Fuc-(1-&gt;3)]-beta-D-GlcNAc-(1-&gt;3)-beta-D-Gal-(1-&gt;4)-[alpha-L-Fuc-(1-&gt;3)]-beta-D-GlcNAc derivative + GDP + H(+). It catalyses the reaction Lc4Cer + GDP-beta-L-fucose = a lactoside III(4)-a-Fuc-Lc4Cer + GDP + H(+). The catalysed reaction is a beta-D-Gal-(1-&gt;3)-beta-D-GlcNAc-(1-&gt;3)-beta-D-Gal-(1-&gt;4)-beta-D-Glc-(1&lt;-&gt;1')-Cer(d18:1(4E)) + GDP-beta-L-fucose = a III(4)-a-Fuc-Lc4Cer(d18:1(4E)) + GDP + H(+). It carries out the reaction N-acetyl-alpha-neuraminosyl-(2-&gt;3)-beta-D-galactosyl-(1-&gt;3)-[N-acetyl-alpha-neuraminosyl-(2-&gt;6)]-N-acetyl-beta-D-glucosaminyl-(1-&gt;3)-beta-D-galactosyl-(1-&gt;4)-beta-D-glucosyl-(1&lt;-&gt;1')-N-acyl-sphing-4-enine + GDP-beta-L-fucose = N-acetyl-alpha-neuraminosyl-(2-&gt;3)-beta-D-galactosyl-(1-&gt;3)-alpha-L-fucosyl-(1-&gt;4)-[N-acetyl-alpha-neuraminosyl-(2-&gt;6)-N-acetyl-beta-D-glucosaminyl-(1-&gt;3)]-beta-D-galactosyl-(1-&gt;4)-beta-D-glucosyl-(1&lt;-&gt;1')-N-acyl-sphing-4-enine + GDP + H(+). The enzyme catalyses N-acetyl-alpha-neuraminosyl-(2-&gt;3)-beta-D-galactosyl-(1-&gt;3)-N-acetyl-beta-D-glucosaminyl-(1-&gt;3)-beta-D-galactosyl-(1-&gt;4)-beta-D-glucosyl-(1&lt;-&gt;1')-N-acyl-sphing-4-enine + GDP-beta-L-fucose = N-acetyl-alpha-neuraminosyl-(2-&gt;3)-beta-D-galactosyl-(1-&gt;3)-alpha-L-fucosyl-(1-&gt;4)-[N-acetyl-beta-D-glucosaminyl-(1-&gt;3)]-beta-D-galactosyl-(1-&gt;4)-beta-D-glucosyl-(1&lt;-&gt;1')-N-acyl-sphing-4-enine + GDP + H(+). It catalyses the reaction beta-D-galactosyl-(1-&gt;3)-N-acetyl-D-glucosamine + GDP-beta-L-fucose = beta-D-galactosyl-(1-&gt;3)-[alpha-L-fucosyl-(1-&gt;4)]-N-acetyl-D-glucosamine + GDP + H(+). The catalysed reaction is alpha-L-Fuc-(1-&gt;2)-beta-D-Gal-(1-&gt;3)-D-GlcNAc + GDP-beta-L-fucose = alpha-L-Fuc-(1-&gt;2)-beta-D-Gal-(1-&gt;3)-[alpha-L-Fuc-(1-&gt;4)]-D-GlcNAc + GDP + H(+). It carries out the reaction alpha-L-Fuc-(1-&gt;2)-beta-D-Gal-(1-&gt;4)-D-GlcNAc + GDP-beta-L-fucose = alpha-L-Fuc-(1-&gt;2)-beta-D-Gal-(1-&gt;4)-[alpha-L-Fuc-(1-&gt;3)]-D-GlcNAc + GDP + H(+). The enzyme catalyses beta-D-galactosyl-(1-&gt;4)-N-acetyl-D-glucosamine + GDP-beta-L-fucose = beta-D-galactosyl-(1-&gt;4)-[alpha-L-fucosyl-(1-&gt;3)]-N-acetyl-D-glucosamine + GDP + H(+). It catalyses the reaction lactose + GDP-beta-L-fucose = beta-D-galactosyl-(1-&gt;4)-[alpha-L-fucosyl-(1-&gt;3)]-D-glucose + GDP + H(+). The catalysed reaction is an alpha-Neu5Ac-(2-&gt;3)-beta-D-Gal-(1-&gt;3)-D-GlcNAc derivative + GDP-beta-L-fucose = an alpha-Neu5Ac-(2-&gt;3)-beta-D-Gal-(1-&gt;3)-[alpha-L-Fuc-(1-&gt;4)]-beta-D-GlcNAc derivative + GDP + H(+). It participates in protein modification; protein glycosylation. Catalyzes the transfer of L-fucose, from a guanosine diphosphate-beta-L-fucose, to both the subterminal N-acetyl glucosamine (GlcNAc) of type 1 chain (beta-D-Gal-(1-&gt;3)-beta-D-GlcNAc) glycolipids and oligosaccharides via an alpha(1,4) linkage, and the subterminal glucose (Glc) or GlcNAc of type 2 chain (beta-D-Gal-(1-&gt;4)-beta-D-GlcNAc) oligosaccharides via an alpha(1,3) linkage, independently of the presence of terminal alpha-L-fucosyl-(1,2) moieties on the terminal galactose of these acceptors and participates in the blood groups Lewis determination and expression of Lewis a (Le(a)), lewis b (Le(b)), Lewis x/SSEA-1 (Le(x)) and lewis y (Le(y)) antigens. Also catalyzes the transfer of L-fucose to subterminal GlcNAc of sialyl- and disialyl-lactotetraosylceramide to produce sialyl Lewis a (sLe(a)) and disialyl Lewis a via an alpha(1,4) linkage and therefore may regulate cell surface sialyl Lewis a expression and consequently regulates adhesive properties to E-selectin, cell proliferation and migration. Catalyzes the transfer of an L-fucose to 3'-sialyl-N-acetyllactosamine by an alpha(1,3) linkage, which allows the formation of sialyl-Lewis x structure and therefore may regulate the sialyl-Lewis x surface antigen expression and consequently adhesive properties to E-selectin. Prefers type 1 chain over type 2 acceptors. Type 1 tetrasaccharide is a better acceptor than type 1 disaccharide suggesting that a beta anomeric configuration of GlcNAc in the substrate is preferred. Lewis-positive (Le(+)) individuals have an active enzyme while Lewis-negative (Le(-)) individuals have an inactive enzyme. This is 3-galactosyl-N-acetylglucosaminide 4-alpha-L-fucosyltransferase FUT3 from Bos taurus (Bovine).